A 225-amino-acid polypeptide reads, in one-letter code: Imidazole glycerol phosphate synthase subunit HisH (225 aa).

The Glutamine amidotransferase type-1 domain maps to 5–220 (KNVIVDTGCA…LELDSTELNQ (216 aa)). The active-site Nucleophile is the Cys-80. Residues His-195 and Glu-197 contribute to the active site.

Heterodimer of HisH and HisF.

Its subcellular location is the cytoplasm. It catalyses the reaction 5-[(5-phospho-1-deoxy-D-ribulos-1-ylimino)methylamino]-1-(5-phospho-beta-D-ribosyl)imidazole-4-carboxamide + L-glutamine = D-erythro-1-(imidazol-4-yl)glycerol 3-phosphate + 5-amino-1-(5-phospho-beta-D-ribosyl)imidazole-4-carboxamide + L-glutamate + H(+). The catalysed reaction is L-glutamine + H2O = L-glutamate + NH4(+). It participates in amino-acid biosynthesis; L-histidine biosynthesis; L-histidine from 5-phospho-alpha-D-ribose 1-diphosphate: step 5/9. In terms of biological role, IGPS catalyzes the conversion of PRFAR and glutamine to IGP, AICAR and glutamate. The HisH subunit catalyzes the hydrolysis of glutamine to glutamate and ammonia as part of the synthesis of IGP and AICAR. The resulting ammonia molecule is channeled to the active site of HisF. This is Imidazole glycerol phosphate synthase subunit HisH from Colwellia psychrerythraea (strain 34H / ATCC BAA-681) (Vibrio psychroerythus).